A 127-amino-acid chain; its full sequence is I-Kappa-B like protein J1 (127 aa).

ANK repeat units follow at residues 43–76 (HGNT…DLDE) and 81–111 (DGDT…RFGS).

It belongs to the polydnaviridae I-Kappa-B-like protein family.

Functionally, suppresses the host immune response through NF-kappa-B inactivation. Possesses ankyrin repeat domains required for NF-kappa-B binding but lacks the regulatory regions required for dissociation from NF-kappa-B and degradation. Therefore, prevents host NF-kappa-B release and subsequent activation. The protein is I-Kappa-B like protein J1 (J2) of Microplitis demolitor (Parasitoid wasp).